The primary structure comprises 116 residues: Iron-sulfur cluster insertion protein ErpA (116 aa).

Residues Cys-44, Cys-108, and Cys-110 each contribute to the iron-sulfur cluster site.

It belongs to the HesB/IscA family. As to quaternary structure, homodimer. Iron-sulfur cluster is required as a cofactor.

Required for insertion of 4Fe-4S clusters for at least IspG. The polypeptide is Iron-sulfur cluster insertion protein ErpA (Shewanella piezotolerans (strain WP3 / JCM 13877)).